Here is a 358-residue protein sequence, read N- to C-terminus: Protein FAM50 homolog (358 aa).

Residues 104–113 show a composition bias toward basic and acidic residues; the sequence is AKLAEKDRQK. The disordered stretch occupies residues 104 to 151; that stretch reads AKLAEKDRQKRQIQALSFDPDDEPDGDDANDGDEGSGKESEKEDVKEE. Residues 122–137 are compositionally biased toward acidic residues; it reads DPDDEPDGDDANDGDE. Residues 138 to 151 show a composition bias toward basic and acidic residues; sequence GSGKESEKEDVKEE.

Belongs to the FAM50 family.

The chain is Protein FAM50 homolog from Anopheles gambiae (African malaria mosquito).